The chain runs to 350 residues: Probable poly-beta-1,6-N-acetyl-D-glucosamine export protein (350 aa).

The next 10 helical transmembrane spans lie at 7-29 (ELVY…TQIT), 44-66 (FYIR…LLTT), 79-101 (TRVK…SESL), 116-138 (LLGQ…SYII), 145-167 (LFNS…YYFT), 187-204 (IIFG…MGYN), 211-233 (FLER…FIAL), 243-262 (SFSY…ILGI), 269-291 (ILFN…HPII), and 306-328 (TMVF…GMIL).

This sequence belongs to the acyltransferase 3 family.

It localises to the cell membrane. Functionally, presumably involved in the export of the biofilm adhesin polysaccharide poly-beta-1,6-N-acetyl-D-glucosamine (PNAG, also referred to as PIA) across the cell membrane. The polypeptide is Probable poly-beta-1,6-N-acetyl-D-glucosamine export protein (icaC) (Staphylococcus aureus (strain Mu50 / ATCC 700699)).